The chain runs to 88 residues: Co-chaperonin GroES (88 aa).

The protein belongs to the GroES chaperonin family. In terms of assembly, heptamer of 7 subunits arranged in a ring. Interacts with the chaperonin GroEL.

The protein localises to the cytoplasm. Its function is as follows. Together with the chaperonin GroEL, plays an essential role in assisting protein folding. The GroEL-GroES system forms a nano-cage that allows encapsulation of the non-native substrate proteins and provides a physical environment optimized to promote and accelerate protein folding. GroES binds to the apical surface of the GroEL ring, thereby capping the opening of the GroEL channel. This chain is Co-chaperonin GroES, found in Treponema pallidum (strain Nichols).